The primary structure comprises 171 residues: T-cell surface glycoprotein CD3 delta chain (171 aa).

An N-terminal signal peptide occupies residues 1-21 (MEHSTFLSGLVLATLLSQVSP). The Extracellular segment spans residues 22–105 (FKIPIEELED…CVELDPATVA (84 aa)). A disulfide bridge links Cys37 with Cys73. Asn38 and Asn74 each carry an N-linked (GlcNAc...) asparagine glycan. The chain crosses the membrane as a helical span at residues 106 to 126 (GIIVTDVIATLLLALGVFCFA). Topologically, residues 127–171 (GHETGRLSGAADTQALLRNDQVYQPLRDRDDAQYSHLGGNWARNK) are cytoplasmic. The ITAM domain maps to 138–166 (DTQALLRNDQVYQPLRDRDDAQYSHLGGN). Phosphotyrosine occurs at positions 149 and 160.

As to quaternary structure, the TCR-CD3 complex is composed of a CD3D/CD3E and a CD3G/CD3E heterodimers that preferentially associate with TCRalpha and TCRbeta, respectively, to form TCRalpha/CD3E/CD3G and TCRbeta/CD3G/CD3E trimers. In turn, the hexamer interacts with CD3Z homodimer to form the TCR-CD3 complex. Alternatively, TCRalpha and TCRbeta can be replaced by TCRgamma and TCRdelta. Interacts with coreceptors CD4 and CD8. Post-translationally, phosphorylated on Tyr residues after T-cell receptor triggering by LCK in association with CD4/CD8. As to expression, CD3D is mostly present on T-lymphocytes with its TCR-CD3 partners. Present also in fetal NK-cells.

The protein localises to the cell membrane. Part of the TCR-CD3 complex present on T-lymphocyte cell surface that plays an essential role in adaptive immune response. When antigen presenting cells (APCs) activate T-cell receptor (TCR), TCR-mediated signals are transmitted across the cell membrane by the CD3 chains CD3D, CD3E, CD3G and CD3Z. All CD3 chains contain immunoreceptor tyrosine-based activation motifs (ITAMs) in their cytoplasmic domain. Upon TCR engagement, these motifs become phosphorylated by Src family protein tyrosine kinases LCK and FYN, resulting in the activation of downstream signaling pathways. In addition of this role of signal transduction in T-cell activation, CD3D plays an essential role in thymocyte differentiation. Indeed, participates in correct intracellular TCR-CD3 complex assembly and surface expression. In absence of a functional TCR-CD3 complex, thymocytes are unable to differentiate properly. Interacts with CD4 and CD8 and thus serves to establish a functional link between the TCR and coreceptors CD4 and CD8, which is needed for activation and positive selection of CD4 or CD8 T-cells. This is T-cell surface glycoprotein CD3 delta chain (CD3D) from Homo sapiens (Human).